A 32-amino-acid polypeptide reads, in one-letter code: MSDIN-like toxin proprotein 1 (32 aa).

Positions 1–10 (MSDINVTRLP) are excised as a propeptide. The segment at residues 11 to 18 (GFVPILFP) is a cross-link (cyclopeptide (Gly-Pro)). Positions 19-32 (CVGDDVNTALTRGE) are excised as a propeptide.

Belongs to the MSDIN fungal toxin family. Processed by the macrocyclase-peptidase enzyme POPB to yield a toxic cyclic octapeptide. POPB first removes 10 residues from the N-terminus. Conformational trapping of the remaining peptide forces the enzyme to release this intermediate rather than proceed to macrocyclization. The enzyme rebinds the remaining peptide in a different conformation and catalyzes macrocyclization of the N-terminal 8 residues.

In terms of biological role, probable toxin that belongs to the MSDIN-like toxin family responsible for a large number of food poisoning cases and deaths. The polypeptide is MSDIN-like toxin proprotein 1 (Amanita bisporigera (Destroying angel)).